The following is a 138-amino-acid chain: Basic phospholipase A2 sistruxin B (138 aa).

The signal sequence occupies residues 1–16; the sequence is MRALWIVAVLLVGVEG. Disulfide bonds link cysteine 42/cysteine 131, cysteine 44/cysteine 60, cysteine 59/cysteine 111, cysteine 65/cysteine 138, cysteine 66/cysteine 104, cysteine 73/cysteine 97, and cysteine 91/cysteine 102. Ca(2+)-binding residues include tyrosine 43, glycine 45, and glycine 47. Residue histidine 63 is part of the active site. Aspartate 64 is a binding site for Ca(2+). Residue aspartate 105 is part of the active site.

As to quaternary structure, heterodimer of an acidic subunit and a basic chain. The acidic subunit is non-toxic, without enzymatic activity and comprises 3 peptides that are cross-linked by 7 disulfide bridges. The basic subunit is toxic, has phospholipase A2 activity and is composed of a single chain. Ca(2+) is required as a cofactor. As to expression, expressed by the venom gland.

Its subcellular location is the secreted. It catalyses the reaction a 1,2-diacyl-sn-glycero-3-phosphocholine + H2O = a 1-acyl-sn-glycero-3-phosphocholine + a fatty acid + H(+). Its function is as follows. Snake venom phospholipase A2 (PLA2) that shows presynaptic neurotoxicity. PLA2 catalyzes the calcium-dependent hydrolysis of the 2-acyl groups in 3-sn-phosphoglycerides. The polypeptide is Basic phospholipase A2 sistruxin B (Sistrurus tergeminus (Western massasauga)).